Reading from the N-terminus, the 242-residue chain is Serine hydrolase cnsH (242 aa).

Catalysis depends on charge relay system residues S56, D138, and H216.

Belongs to the AB hydrolase 3 family.

It participates in alkaloid biosynthesis. Serine hydrolase; part of the gene cluster that mediates the biosynthesis of communesins, a prominent class of indole alkaloids with great potential as pharmaceuticals. Communesins are biosynthesized by the coupling of tryptamine and aurantioclavine, two building blocks derived from L-tryptophan. The L-tryptophan decarboxylase cnsB converts L-tryptophan to tryptamine, whereas the tryptophan dimethylallyltransferase cnsF converts L-tryptophan to 4-dimethylallyl tryptophan which is further transformed to aurantioclavine by the aurantioclavine synthase cnsA, probably aided by the catalase cnsD. The cytochrome P450 monooxygenase cnsC catalyzes the heterodimeric coupling between the two different indole moieties, tryptamine and aurantioclavine, to construct vicinal quaternary stereocenters and yield the heptacyclic communesin scaffold. The O-methyltransferase cnsE then methylates the communesin scaffold to produce communesin K, the simplest characterized communesin that contains the heptacyclic core. The dioxygenase cnsJ converts communesin K into communesin I. Acylation to introduce the hexadienyl group at position N16 of communesin I by the acyltransferase cnsK leads to the production of communesin B. The hexadienyl group is produced by the highly reducing polyketide synthase cnsI, before being hydrolytically removed from cnsI by the serine hydrolase cnsH, converted into hexadienyl-CoA by the CoA ligase cnsG, and then transferred to communesin I by cnsK. Surprisingly, cnsK may also be a promiscuous acyltransferase that can tolerate a range of acyl groups, including acetyl-, propionyl-, and butyryl-CoA, which lead to communesins A, G and H respectively. The roles of the alpha-ketoglutarate-dependent dioxygenases cnsM and cnsP have still to be determined. This is Serine hydrolase cnsH from Penicillium expansum (Blue mold rot fungus).